The primary structure comprises 846 residues: Protein arginine N-methyltransferase 9 (846 aa).

3 TPR repeats span residues 25–58 (VARS…APEL), 67–100 (QYTL…FPDD), and 101–134 (EVIC…NPDF). 2 SAM-dependent MTase PRMT-type domains span residues 137–466 (AKEN…YLRI) and 530–846 (NIPY…AVKP).

This sequence belongs to the class I-like SAM-binding methyltransferase superfamily. Protein arginine N-methyltransferase family. In terms of assembly, found in a complex with PRMT9, SF3B2 and SF3B4. Interacts with SF3B2.

It is found in the cytoplasm. The enzyme catalyses L-arginyl-[protein] + 2 S-adenosyl-L-methionine = N(omega),N(omega)'-dimethyl-L-arginyl-[protein] + 2 S-adenosyl-L-homocysteine + 2 H(+). Its function is as follows. Arginine methyltransferase that can both catalyze the formation of omega-N monomethylarginine (MMA) and symmetrical dimethylarginine (sDMA). Specifically mediates the symmetrical dimethylation of SF3B2. Involved in the regulation of alternative splicing of pre-mRNA. In Mus musculus (Mouse), this protein is Protein arginine N-methyltransferase 9 (Prmt9).